The primary structure comprises 346 residues: Melatonin receptor type 1C (346 aa).

Residues 1 to 26 (MERPGSNGSCSGCRLEGGPAARAASG) lie on the Extracellular side of the membrane. Asn-7 carries an N-linked (GlcNAc...) asparagine glycan. A helical transmembrane segment spans residues 27–47 (LAAVLIVTIVVDVLGNALVIL). The Cytoplasmic segment spans residues 48–60 (SVLRNKKLRNAGN). The helical transmembrane segment at 61–81 (IFVVSLSVADLVVAVYPYPLI) threads the bilayer. Topologically, residues 82–99 (LSAIFHNGWTMGNIHCQI) are extracellular. Cys-97 and Cys-174 form a disulfide bridge. The chain crosses the membrane as a helical span at residues 100–120 (SGFLMGLSVIGSIFNITAIAI). The Cytoplasmic segment spans residues 121–139 (NRYCYICHSLRYDKLFNLK). The chain crosses the membrane as a helical span at residues 140 to 160 (NTCCYICLTWTLTVVAIVPNF). The Extracellular segment spans residues 161 to 184 (FVGSLQYDPRIYSCTFAQTVSTSY). A helical membrane pass occupies residues 185–205 (TITVVVVHFIVPLSIVTFCYL). Over 206-237 (RIWILVIQVKHRVRQDCKQKIRAADIRNFLTM) the chain is Cytoplasmic. A helical transmembrane segment spans residues 238-258 (FVVFVLFAVCWGPLNFIGLAV). The Extracellular segment spans residues 259 to 271 (SINPSKVQPHIPE). The chain crosses the membrane as a helical span at residues 272–292 (WLFVLSYFMAYFNSCLNAVIY). Residues 293–346 (GLLNQNFRKEYKRILLMLRTPRLLFIDVSKGGTEGLKSKPSPAVTNNNQAEIHL) are Cytoplasmic-facing. The segment at 326-346 (EGLKSKPSPAVTNNNQAEIHL) is disordered. The segment covering 335-346 (AVTNNNQAEIHL) has biased composition (polar residues).

The protein belongs to the G-protein coupled receptor 1 family. As to expression, expressed in optic tectum, neostriatum, hypothalamus, thalamus and pineal gland, less in cerebellum and retina.

Its subcellular location is the cell membrane. Its function is as follows. High affinity receptor for melatonin. The activity of this receptor is mediated by pertussis toxin sensitive G proteins that inhibits adenylate cyclase activity. The chain is Melatonin receptor type 1C from Gallus gallus (Chicken).